A 455-amino-acid chain; its full sequence is Probable glycine dehydrogenase (decarboxylating) subunit 1 (455 aa).

This sequence belongs to the GcvP family. N-terminal subunit subfamily. In terms of assembly, the glycine cleavage system is composed of four proteins: P, T, L and H. In this organism, the P 'protein' is a heterodimer of two subunits.

The enzyme catalyses N(6)-[(R)-lipoyl]-L-lysyl-[glycine-cleavage complex H protein] + glycine + H(+) = N(6)-[(R)-S(8)-aminomethyldihydrolipoyl]-L-lysyl-[glycine-cleavage complex H protein] + CO2. The glycine cleavage system catalyzes the degradation of glycine. The P protein binds the alpha-amino group of glycine through its pyridoxal phosphate cofactor; CO(2) is released and the remaining methylamine moiety is then transferred to the lipoamide cofactor of the H protein. The polypeptide is Probable glycine dehydrogenase (decarboxylating) subunit 1 (Francisella tularensis subsp. novicida (strain U112)).